Reading from the N-terminus, the 184-residue chain is Protein GrpE (184 aa).

A compositionally biased stretch (polar residues) spans 1 to 14; that stretch reads MANEQNEQSQDLSS. The segment at 1–35 is disordered; the sequence is MANEQNEQSQDLSSEQTTQDHEQTQTEGVEQGAEI.

Belongs to the GrpE family. In terms of assembly, homodimer.

Its subcellular location is the cytoplasm. Functionally, participates actively in the response to hyperosmotic and heat shock by preventing the aggregation of stress-denatured proteins, in association with DnaK and GrpE. It is the nucleotide exchange factor for DnaK and may function as a thermosensor. Unfolded proteins bind initially to DnaJ; upon interaction with the DnaJ-bound protein, DnaK hydrolyzes its bound ATP, resulting in the formation of a stable complex. GrpE releases ADP from DnaK; ATP binding to DnaK triggers the release of the substrate protein, thus completing the reaction cycle. Several rounds of ATP-dependent interactions between DnaJ, DnaK and GrpE are required for fully efficient folding. The protein is Protein GrpE of Acinetobacter baylyi (strain ATCC 33305 / BD413 / ADP1).